We begin with the raw amino-acid sequence, 56 residues long: Prokaryotic ubiquitin-like protein UBact (56 aa).

Residues 1 to 56 (MPDQAQKTRPVGPGPSGGGEGPGSPKVEKPNTEELLKRMRKVDPDQAKRYRQRTGQ) form a disordered region. Residues 26–48 (KVEKPNTEELLKRMRKVDPDQAK) show a composition bias toward basic and acidic residues. Glutamine 56 is modified (deamidated glutamine). Residue glutamine 56 forms an Isoglutamyl lysine isopeptide (Gln-Lys) (interchain with K-? in acceptor proteins) linkage.

It belongs to the ubiquitin-like protein UBact family. May be modified by deamidation of its C-terminal glutamine to glutamate by the adjacently encoded deamidase. This could be a prerequisite to the subsequent conjugation, as shown in the other prokaryotic ubiquitin-like protein Pup.

In terms of biological role, may function as a protein modifier covalently attached to lysine residues of substrate proteins. This may serve to target the modified proteins for degradation by proteasomes. This chain is Prokaryotic ubiquitin-like protein UBact, found in Pedosphaera parvula (strain Ellin514).